The primary structure comprises 337 residues: Ribosomal RNA small subunit methyltransferase H (337 aa).

Residues 36–38 (GGH), aspartate 56, phenylalanine 82, aspartate 100, and glutamine 107 each bind S-adenosyl-L-methionine. The segment at 315 to 337 (LEERSKRIPNPQSPIPASQGDAQ) is disordered.

It belongs to the methyltransferase superfamily. RsmH family.

It localises to the cytoplasm. The enzyme catalyses cytidine(1402) in 16S rRNA + S-adenosyl-L-methionine = N(4)-methylcytidine(1402) in 16S rRNA + S-adenosyl-L-homocysteine + H(+). Its function is as follows. Specifically methylates the N4 position of cytidine in position 1402 (C1402) of 16S rRNA. This chain is Ribosomal RNA small subunit methyltransferase H, found in Xanthomonas euvesicatoria pv. vesicatoria (strain 85-10) (Xanthomonas campestris pv. vesicatoria).